Reading from the N-terminus, the 111-residue chain is Cell division protein FtsB (111 aa).

The Cytoplasmic segment spans residues 1–3 (MGK). Residues 4–21 (LTLLLLILLGWLQYSLWL) form a helical membrane-spanning segment. Over 22-111 (GKNGIHDYVR…TNTSSNNTQR (90 aa)) the chain is Periplasmic. Residues 33-63 (KDDVVVQQGNNAKLKDRNEQLFAEIDDLNGG) are a coiled coil. The interval 88 to 111 (VPESNHRNANTPSSTNTSSNNTQR) is disordered. Positions 97–111 (NTPSSTNTSSNNTQR) are enriched in low complexity.

This sequence belongs to the FtsB family. As to quaternary structure, part of a complex composed of FtsB, FtsL and FtsQ.

Its subcellular location is the cell inner membrane. Essential cell division protein. May link together the upstream cell division proteins, which are predominantly cytoplasmic, with the downstream cell division proteins, which are predominantly periplasmic. The polypeptide is Cell division protein FtsB (Pectobacterium atrosepticum (strain SCRI 1043 / ATCC BAA-672) (Erwinia carotovora subsp. atroseptica)).